Reading from the N-terminus, the 352-residue chain is Zinc transporter 1 (352 aa).

The signal sequence occupies residues 1–29 (MARTMTMRVSSLLVAVVLLAALSFQACSG). Residues 30–56 (HGGINDGDGQVDAPATPASSSGVRSKG) are Extracellular-facing. A helical membrane pass occupies residues 57–77 (LIAVKVWCLVILLVFTFAGGV). The Cytoplasmic portion of the chain corresponds to 78–87 (SPYFYRWNES). Residues 88 to 108 (FLLLGTQFAAGVFLGTALMHF) form a helical membrane-spanning segment. The Extracellular segment spans residues 109–127 (LADSTSTFKGLTTNQYPFS). A helical transmembrane segment spans residues 128–148 (FMLTCVGFLLTMLSDLVIAAV). The Cytoplasmic segment spans residues 149–200 (ARRSAAAGVSDNQVSEQQQRQQAEGAVMSRKEEEAAAVAHPAMLVRTSSFED). Residues 201–221 (AVLLIVALCFHSVFEGIAIGV) form a helical membrane-spanning segment. The Extracellular portion of the chain corresponds to 222–230 (SASKSEAWR). Residues 231–251 (NLWTIGLHKIFAAVAMGIALL) form a helical membrane-spanning segment. Over 252-262 (RMIPKRPFLMT) the chain is Cytoplasmic. Residues 263–283 (VVYSLAFAVSSPVGVGIGIAI) form a helical membrane-spanning segment. Over 284–296 (DATSQGRAADWTY) the chain is Extracellular. The helical transmembrane segment at 297 to 317 (AISMGLATGVFIYVAINHLIA) threads the bilayer. The Cytoplasmic portion of the chain corresponds to 318–330 (KGYRPHHPTAADK). Residues 331–351 (PLFKFLAVLLGVAVMAVVMIW) form a helical membrane-spanning segment. Asp-352 is a topological domain (extracellular).

It belongs to the ZIP transporter (TC 2.A.5) family. As to expression, expressed in vascular bundles of roots and leaves.

Its subcellular location is the cell membrane. Zinc transporter that may mediate zinc uptake from the rhizosphere. May also transport other divalent cations. This chain is Zinc transporter 1 (ZIP1), found in Oryza sativa subsp. japonica (Rice).